Consider the following 110-residue polypeptide: Cell cycle protein GpsB (110 aa).

The stretch at 32–73 forms a coiled coil; it reads LDDVIKDYENYLEQIEKLQMENRRLQQALDKKESEASNVRNS.

This sequence belongs to the GpsB family. As to quaternary structure, forms polymers through the coiled coil domains. Interacts with PBP1, MreC and EzrA.

It is found in the cytoplasm. In terms of biological role, divisome component that associates with the complex late in its assembly, after the Z-ring is formed, and is dependent on DivIC and PBP2B for its recruitment to the divisome. Together with EzrA, is a key component of the system that regulates PBP1 localization during cell cycle progression. Its main role could be the removal of PBP1 from the cell pole after pole maturation is completed. Also contributes to the recruitment of PBP1 to the division complex. Not essential for septum formation. In Streptococcus agalactiae serotype Ia (strain ATCC 27591 / A909 / CDC SS700), this protein is Cell cycle protein GpsB.